Reading from the N-terminus, the 336-residue chain is Glucokinase (336 aa).

12–17 (ADIGGT) is an ATP binding site.

This sequence belongs to the bacterial glucokinase family.

It is found in the cytoplasm. It carries out the reaction D-glucose + ATP = D-glucose 6-phosphate + ADP + H(+). The protein is Glucokinase of Helicobacter pylori (strain ATCC 700392 / 26695) (Campylobacter pylori).